The following is a 463-amino-acid chain: Mitochondrial dynamics protein MIEF1 (463 aa).

The Mitochondrial intermembrane portion of the chain corresponds to 1–23 (MAGAGERKGKKDDNGIGTAIDFV). A helical transmembrane segment spans residues 24–46 (LSNARLVLGVGGAAMLGIATLAV). The Cytoplasmic portion of the chain corresponds to 47 to 463 (KRMYDRAISA…LSEPEVLLQT (417 aa)). Positions 49–195 (MYDRAISAPT…LSGSLYDDLQ (147 aa)) are dimerization. 4 positions are modified to phosphoserine: Ser55, Ser59, Ser79, and Ser94. Positions 57-77 (PTSPTRLSHSGKRSWEEPNWM) are disordered. The tract at residues 96 to 123 (QTLPTDSSTFDTDTFCPPRPKPVARKGQ) is disordered. The segment covering 100–110 (TDSSTFDTDTF) has biased composition (low complexity). Residues 160–169 (AAVDICAELR) are important for interaction with DNM1L. 3 residues coordinate ADP: Ser187, Ser189, and His201. The segment at 234–242 (RRENPEYFP) is important for interaction with DNM1L. Positions 340, 342, and 368 each coordinate ADP.

The protein belongs to the SMCR7 family. In terms of assembly, homodimer. Interacts with DNM1L. Expression is relatively high in heart, skeletal muscle, pancreas and kidney.

It is found in the mitochondrion outer membrane. Its function is as follows. Mitochondrial outer membrane protein which regulates mitochondrial fission/fusion dynamics. Promotes the recruitment and association of the fission mediator dynamin-related protein 1 (DNM1L) to the mitochondrial surface independently of the mitochondrial fission FIS1 and MFF proteins. Regulates DNM1L GTPase activity and DNM1L oligomerization. Binds ADP and can also bind GDP, although with lower affinity. Does not bind CDP, UDP, ATP, AMP or GTP. Inhibits DNM1L GTPase activity in the absence of bound ADP. Requires ADP to stimulate DNM1L GTPase activity and the assembly of DNM1L into long, oligomeric tubules with a spiral pattern, as opposed to the ring-like DNM1L oligomers observed in the absence of bound ADP. Does not require ADP for its function in recruiting DNM1L. The sequence is that of Mitochondrial dynamics protein MIEF1 from Homo sapiens (Human).